The following is a 66-amino-acid chain: Large ribosomal subunit protein bL35 (66 aa).

Residues 1 to 26 are compositionally biased toward basic residues; that stretch reads MPKMKTHRGSAKRFKKTGSGKLKRSH. Positions 1–48 are disordered; it reads MPKMKTHRGSAKRFKKTGSGKLKRSHAYTSHLFANKSQKQKRKLRKSA.

The protein belongs to the bacterial ribosomal protein bL35 family. In terms of assembly, part of the 50S ribosomal subunit.

The chain is Large ribosomal subunit protein bL35 from Bacillus subtilis (strain 168).